We begin with the raw amino-acid sequence, 525 residues long: Bifunctional enzyme NanE/NanK (525 aa).

The manNAc-6-P epimerase stretch occupies residues 1–241; that stretch reads MRGSPRNLCR…DAVESAAKPS (241 aa). The tract at residues 242–525 is manNAc kinase; sequence SPVLAFDIGG…VADLAATYFS (284 aa). Residues 246 to 253 and 372 to 379 each bind ATP; these read AFDIGGTK and GIGGGIVL.

In the N-terminal section; belongs to the NanE family. This sequence in the C-terminal section; belongs to the ROK (NagC/XylR) family. NanK subfamily.

The catalysed reaction is an N-acyl-D-glucosamine 6-phosphate = an N-acyl-D-mannosamine 6-phosphate. It catalyses the reaction an N-acyl-D-mannosamine + ATP = an N-acyl-D-mannosamine 6-phosphate + ADP + H(+). Its pathway is amino-sugar metabolism; N-acetylneuraminate degradation; D-fructose 6-phosphate from N-acetylneuraminate: step 2/5. The protein operates within amino-sugar metabolism; N-acetylneuraminate degradation; D-fructose 6-phosphate from N-acetylneuraminate: step 3/5. Converts N-acetylmannosamine-6-phosphate (ManNAc-6-P) to N-acetylglucosamine-6-phosphate (GlcNAc-6-P). Its function is as follows. Catalyzes the phosphorylation of N-acetylmannosamine (ManNAc) to ManNAc-6-P. This Brucella suis biovar 1 (strain 1330) protein is Bifunctional enzyme NanE/NanK (nanEK).